The sequence spans 227 residues: Probable methylthioribulose-1-phosphate dehydratase (227 aa).

Residue Cys-87 coordinates substrate. Zn(2+)-binding residues include His-105 and His-107. Residue Glu-129 is the Proton donor/acceptor of the active site. His-185 serves as a coordination point for Zn(2+).

It belongs to the aldolase class II family. MtnB subfamily. Requires Zn(2+) as cofactor.

The protein localises to the cytoplasm. It carries out the reaction 5-(methylsulfanyl)-D-ribulose 1-phosphate = 5-methylsulfanyl-2,3-dioxopentyl phosphate + H2O. Its pathway is amino-acid biosynthesis; L-methionine biosynthesis via salvage pathway; L-methionine from S-methyl-5-thio-alpha-D-ribose 1-phosphate: step 2/6. In terms of biological role, catalyzes the dehydration of methylthioribulose-1-phosphate (MTRu-1-P) into 2,3-diketo-5-methylthiopentyl-1-phosphate (DK-MTP-1-P). The chain is Probable methylthioribulose-1-phosphate dehydratase from Drosophila mojavensis (Fruit fly).